Reading from the N-terminus, the 478-residue chain is Glycogen synthase (478 aa).

K15 is a binding site for ADP-alpha-D-glucose.

Belongs to the glycosyltransferase 1 family. Bacterial/plant glycogen synthase subfamily.

It catalyses the reaction [(1-&gt;4)-alpha-D-glucosyl](n) + ADP-alpha-D-glucose = [(1-&gt;4)-alpha-D-glucosyl](n+1) + ADP + H(+). It functions in the pathway glycan biosynthesis; glycogen biosynthesis. In terms of biological role, synthesizes alpha-1,4-glucan chains using ADP-glucose. In Clostridium botulinum (strain Alaska E43 / Type E3), this protein is Glycogen synthase.